The following is a 199-amino-acid chain: FMN-dependent NADH:quinone oxidoreductase 2 (199 aa).

FMN-binding positions include Ser-10, 16–18, and 96–99; these read SVS and MYNF.

Belongs to the azoreductase type 1 family. As to quaternary structure, homodimer. The cofactor is FMN.

It carries out the reaction 2 a quinone + NADH + H(+) = 2 a 1,4-benzosemiquinone + NAD(+). The enzyme catalyses N,N-dimethyl-1,4-phenylenediamine + anthranilate + 2 NAD(+) = 2-(4-dimethylaminophenyl)diazenylbenzoate + 2 NADH + 2 H(+). Quinone reductase that provides resistance to thiol-specific stress caused by electrophilic quinones. In terms of biological role, also exhibits azoreductase activity. Catalyzes the reductive cleavage of the azo bond in aromatic azo compounds to the corresponding amines. The polypeptide is FMN-dependent NADH:quinone oxidoreductase 2 (Pseudomonas putida (strain ATCC 47054 / DSM 6125 / CFBP 8728 / NCIMB 11950 / KT2440)).